The primary structure comprises 306 residues: D-alanine--D-alanine ligase (306 aa).

Residues 102-300 (KIIAASAGVS…YGDIVKWIVE (199 aa)) enclose the ATP-grasp domain. 128–183 (PMKPPYVIKPIREGSSFGVVIVGSDETMPLHDIMNNEWVYDDEIMVEKYVPGRELT) contributes to the ATP binding site. 3 residues coordinate Mg(2+): aspartate 253, glutamate 267, and asparagine 269.

Belongs to the D-alanine--D-alanine ligase family. Mg(2+) serves as cofactor. Mn(2+) is required as a cofactor.

It is found in the cytoplasm. It carries out the reaction 2 D-alanine + ATP = D-alanyl-D-alanine + ADP + phosphate + H(+). The protein operates within cell wall biogenesis; peptidoglycan biosynthesis. Cell wall formation. The sequence is that of D-alanine--D-alanine ligase from Bartonella bacilliformis (strain ATCC 35685 / KC583 / Herrer 020/F12,63).